The primary structure comprises 617 residues: Chaperone protein HscA homolog (617 aa).

Belongs to the heat shock protein 70 family.

Chaperone involved in the maturation of iron-sulfur cluster-containing proteins. Has a low intrinsic ATPase activity which is markedly stimulated by HscB. The protein is Chaperone protein HscA homolog of Photobacterium profundum (strain SS9).